The sequence spans 425 residues: Monoacylglycerol lipase ABHD2 (425 aa).

The Cytoplasmic segment spans residues 1–9; the sequence is MNAMLETPE. The helical; Signal-anchor for type II membrane protein transmembrane segment at 10–30 threads the bilayer; that stretch reads LPAVFDGVKLAAVAAVLYVIV. The Extracellular portion of the chain corresponds to 31–425; that stretch reads RCLNLKSPTA…DTEQMEAELE (395 aa). The AB hydrolase-1 domain maps to 128–382; sequence MVICPGIANH…HGGHLGFFEG (255 aa). N-linked (GlcNAc...) asparagine glycosylation occurs at Asn-136. Ser-207 acts as the Nucleophile in catalysis. Active-site charge relay system residues include Asp-345 and His-376. N-linked (GlcNAc...) asparagine glycosylation is present at Asn-410.

This sequence belongs to the AB hydrolase superfamily. AB hydrolase 4 family. In terms of tissue distribution, widely expressed with higher expression in testis. Expressed by vascular smooth muscle cells, non vascular smooth muscle cells and heart.

It is found in the cell membrane. The protein localises to the cytoplasmic vesicle. Its subcellular location is the secretory vesicle. The protein resides in the acrosome membrane. The catalysed reaction is Hydrolyzes glycerol monoesters of long-chain fatty acids.. It carries out the reaction an acetyl ester + H2O = an aliphatic alcohol + acetate + H(+). It catalyses the reaction a triacylglycerol + H2O = a diacylglycerol + a fatty acid + H(+). The enzyme catalyses 2-(5Z,8Z,11Z,14Z-eicosatetraenoyl)-glycerol + H2O = glycerol + (5Z,8Z,11Z,14Z)-eicosatetraenoate + H(+). The catalysed reaction is a butanoate ester + H2O = an aliphatic alcohol + butanoate + H(+). It carries out the reaction hexadecanoate ester + H2O = an aliphatic alcohol + hexadecanoate + H(+). Acylglycerol lipase activity is activated upon binding to progesterone. Its function is as follows. Progesterone-dependent acylglycerol lipase that catalyzes hydrolysis of endocannabinoid arachidonoylglycerol (AG) from cell membrane. Acts as a progesterone receptor: progesterone-binding activates the acylglycerol lipase activity, mediating degradation of 1-arachidonoylglycerol (1AG) and 2-arachidonoylglycerol (2AG) to glycerol and arachidonic acid (AA). Also displays an ester hydrolase activity against acetyl ester, butanoate ester and hexadecanoate ester. Plays a key role in sperm capacitation in response to progesterone by mediating degradation of 2AG, an inhibitor of the sperm calcium channel CatSper, leading to calcium influx via CatSper and sperm activation. Involved in acrosomal reaction. May also play a role in smooth muscle cells migration. This Mus musculus (Mouse) protein is Monoacylglycerol lipase ABHD2 (Abhd2).